Here is a 574-residue protein sequence, read N- to C-terminus: MEVLKKDAALGSPSSVFYFLLLPTLVLWYIYWRLSRAHLYRLAGRLPGPRGLPIVGHLFDVIGPASSVFRTVIRKSAPFEHIAKMWIGPKLVVFIYDPRDVELLLSSHVYIDKASEYKFFKPWLGDGLLISTGQKWRSHRKLIAPTFHLNVLKSFIELFNENSRNVVRKLRAEDGRTFDCHDYMSEATVEILLETAMGVSKKTQDKSGFEYAMAVMRMCDILHARHRSIFLRNEFVFTLTRYYKEQGRLLNIIHGLTTKVIRSKKAAFEQGTRGSLAQCELKAAALEREREQNGGVDQTPSTAGSDEKDREKDKEKASPVAGLSYGQSAGLKDDLDVEDNDIGEKKRLAFLDLMLESAQNGALITDTEIKEQVDTIMFEGHDTTAAGSSFFLSLMGIHQDIQDRVLAELDSIFGDSQRPATFQDTLEMKYLERCLMETLRMYPPVPLIARELQEDLKLNSGNYVIPRGATVTVATVLLHRNPKVYANPNVFDPDNFLPERQANRHYYAFVPFSAGPRSCVGRKYAMLKLKILLSTILRNYRVYSDLTESDFKLQADIILKREEGFRVRLQPRTS.

The tract at residues arginine 288 to glutamine 327 is disordered. Residues glycine 295–glycine 304 show a composition bias toward polar residues. Over residues serine 305–alanine 317 the composition is skewed to basic and acidic residues. Heme contacts are provided by glutamate 379 and cysteine 519.

Belongs to the cytochrome P450 family. It depends on heme as a cofactor. As to expression, expressed in larval brain cortex cells and ring glands and weakly in larval digestive system and adult nervous system.

It localises to the endoplasmic reticulum membrane. The protein localises to the microsome membrane. Functionally, probably involved in steroid hormones biosynthesis. This is Cytochrome P450 4g15 (Cyp4g15) from Drosophila melanogaster (Fruit fly).